The sequence spans 676 residues: DNA ligase (676 aa).

NAD(+) is bound by residues 34–38 (DAEYD), 84–85 (SL), and Glu116. Lys118 serves as the catalytic N6-AMP-lysine intermediate. NAD(+) contacts are provided by Arg139, Glu174, Lys294, and Lys318. Zn(2+) is bound by residues Cys412, Cys415, Cys428, and Cys433. Positions 589–676 (KGGEALKGLT…RTGKKAEELV (88 aa)) constitute a BRCT domain.

This sequence belongs to the NAD-dependent DNA ligase family. LigA subfamily. Mg(2+) serves as cofactor. It depends on Mn(2+) as a cofactor.

It catalyses the reaction NAD(+) + (deoxyribonucleotide)n-3'-hydroxyl + 5'-phospho-(deoxyribonucleotide)m = (deoxyribonucleotide)n+m + AMP + beta-nicotinamide D-nucleotide.. In terms of biological role, DNA ligase that catalyzes the formation of phosphodiester linkages between 5'-phosphoryl and 3'-hydroxyl groups in double-stranded DNA using NAD as a coenzyme and as the energy source for the reaction. It is essential for DNA replication and repair of damaged DNA. The polypeptide is DNA ligase (Thermus thermophilus (strain ATCC 27634 / DSM 579 / HB8)).